We begin with the raw amino-acid sequence, 177 residues long: Large ribosomal subunit protein uL6 (177 aa).

Belongs to the universal ribosomal protein uL6 family. In terms of assembly, part of the 50S ribosomal subunit.

Functionally, this protein binds to the 23S rRNA, and is important in its secondary structure. It is located near the subunit interface in the base of the L7/L12 stalk, and near the tRNA binding site of the peptidyltransferase center. The protein is Large ribosomal subunit protein uL6 of Janthinobacterium sp. (strain Marseille) (Minibacterium massiliensis).